Consider the following 90-residue polypeptide: Delta-aiptatoxin-Adi1a (90 aa).

Positions 1 to 21 (MKTAMLIAVLGFCAALCFVES) are cleaved as a signal peptide. The propeptide occupies 22-44 (SHEEEREAAVYLTDLVSKAESAI). 3 cysteine pairs are disulfide-bonded: cysteine 50-cysteine 86, cysteine 52-cysteine 77, and cysteine 70-cysteine 87.

It belongs to the sea anemone sodium channel inhibitory toxin family.

The protein resides in the secreted. It is found in the nematocyst. In terms of biological role, cardioactive peptide that acts on voltage-gated sodium channels (hNav1.5/SCN5A) and voltage-gated potassium channels (Kv). The activity on sodium channels consists of inhibition on sodium current inactivation with no significant effect on current activation. This effect may be caused by direct interaction of the toxin with sodium channel site-3. The activity on potassium channels consists of a significant increase of the amplitude of the transient component of the potassium current, shifting the current threshold to more negative membrane potentials. These effects are concentration-dependent and reversible and may be due to a direct interaction between the toxin and the voltage-sensing domain of the channel. Physiologically, this toxin increases the amplitude of cardiomyocyte contraction and slows the late phase of the twitch relaxation velocity with no induction of spontaneous twitching. It increases action potential duration of cardiomyocytes with no effect on its threshold and on the cell resting potential. On insects, it shows neurotoxic activity to the blowfly larvae S.falculaty, causing an immediate spasm that progressed to body contraction and paralysis. The protein is Delta-aiptatoxin-Adi1a of Exaiptasia diaphana (Tropical sea anemone).